Reading from the N-terminus, the 292-residue chain is Homoserine kinase (292 aa).

84 to 94 is an ATP binding site; that stretch reads PISRGLGSSSA.

This sequence belongs to the GHMP kinase family. Homoserine kinase subfamily.

It is found in the cytoplasm. The enzyme catalyses L-homoserine + ATP = O-phospho-L-homoserine + ADP + H(+). It functions in the pathway amino-acid biosynthesis; L-threonine biosynthesis; L-threonine from L-aspartate: step 4/5. Catalyzes the ATP-dependent phosphorylation of L-homoserine to L-homoserine phosphate. This Sulfurovum sp. (strain NBC37-1) protein is Homoserine kinase.